The primary structure comprises 289 residues: Mitochondrial fission regulator 1-like (289 aa).

The residue at position 27 (Thr-27) is a Phosphothreonine. Ser-38 carries the post-translational modification Phosphoserine. Ser-100 carries the phosphoserine; by AMPK modification. A phosphoserine mark is found at Ser-107, Ser-221, and Ser-222. Ser-235 carries the phosphoserine; by AMPK modification. Phosphoserine occurs at positions 258 and 270.

This sequence belongs to the MTFR1 family. Phosphorylated by AMPK. Upon stress, phosphorylation at Ser-100 and Ser-235 by AMPK is sufficient to induce mitochondrial fragmentation.

The protein resides in the mitochondrion outer membrane. Functionally, mitochondrial protein required for adaptation of miochondrial dynamics to metabolic changes. Regulates mitochondrial morphology at steady state and mediates AMPK-dependent stress-induced mitochondrial fragmentation via the control of OPA1 levels. In Mus musculus (Mouse), this protein is Mitochondrial fission regulator 1-like (Mtfr1l).